We begin with the raw amino-acid sequence, 127 residues long: Ribonuclease P protein component (127 aa).

Residues 99 to 127 (ALSASLRQQLRDGIDRSARRQEPAAERQR) are disordered. A compositionally biased stretch (basic and acidic residues) spans 107 to 127 (QLRDGIDRSARRQEPAAERQR).

It belongs to the RnpA family. As to quaternary structure, consists of a catalytic RNA component (M1 or rnpB) and a protein subunit.

The enzyme catalyses Endonucleolytic cleavage of RNA, removing 5'-extranucleotides from tRNA precursor.. Functionally, RNaseP catalyzes the removal of the 5'-leader sequence from pre-tRNA to produce the mature 5'-terminus. It can also cleave other RNA substrates such as 4.5S RNA. The protein component plays an auxiliary but essential role in vivo by binding to the 5'-leader sequence and broadening the substrate specificity of the ribozyme. This Mycobacteroides abscessus (strain ATCC 19977 / DSM 44196 / CCUG 20993 / CIP 104536 / JCM 13569 / NCTC 13031 / TMC 1543 / L948) (Mycobacterium abscessus) protein is Ribonuclease P protein component.